We begin with the raw amino-acid sequence, 102 residues long: MLARVAESVSCGLMGQVKTGLLLFDGSGFSDRLGVMRFYVWSSRIYVLVLVVQAQLILDAHNGVLFLLLFFLHNFFLLPQLFQFLLSGCLIFLNDVYFNLMV.

2 helical membrane passes run 38 to 58 and 64 to 84; these read FYVW…QLIL and VLFL…LFQF.

It localises to the membrane. This is an uncharacterized protein from Saccharomyces cerevisiae (strain ATCC 204508 / S288c) (Baker's yeast).